Here is a 441-residue protein sequence, read N- to C-terminus: Chromosomal replication initiator protein DnaA (441 aa).

Residues 1-80 are domain I, interacts with DnaA modulators; it reads MQNDVLARWE…MHQEISLQFI (80 aa). Residues 80 to 102 form a domain II region; the sequence is ILAGQEVDQPKPKERSSEETYIN. The domain III, AAA+ region stretch occupies residues 103 to 320; that stretch reads ILNPRYTFDT…GALIRVSAFS (218 aa). Residues Gly-147, Gly-149, Lys-150, and Thr-151 each contribute to the ATP site. A domain IV, binds dsDNA region spans residues 321–441; sequence SLEQRDATPQ…IKELKKRIGE (121 aa).

This sequence belongs to the DnaA family. As to quaternary structure, oligomerizes as a right-handed, spiral filament on DNA at oriC.

Its subcellular location is the cytoplasm. In terms of biological role, plays an essential role in the initiation and regulation of chromosomal replication. ATP-DnaA binds to the origin of replication (oriC) to initiate formation of the DNA replication initiation complex once per cell cycle. Binds the DnaA box (a 9 base pair repeat at the origin) and separates the double-stranded (ds)DNA. Forms a right-handed helical filament on oriC DNA; dsDNA binds to the exterior of the filament while single-stranded (ss)DNA is stabiized in the filament's interior. The ATP-DnaA-oriC complex binds and stabilizes one strand of the AT-rich DNA unwinding element (DUE), permitting loading of DNA polymerase. After initiation quickly degrades to an ADP-DnaA complex that is not apt for DNA replication. Binds acidic phospholipids. The polypeptide is Chromosomal replication initiator protein DnaA (Desulforamulus reducens (strain ATCC BAA-1160 / DSM 100696 / MI-1) (Desulfotomaculum reducens)).